A 484-amino-acid chain; its full sequence is PTS system MurNAc-GlcNAc-specific EIIBC component (484 aa).

Residues 5–87 form the PTS EIIB type-1 domain; sequence QQLAERIIAA…AELSGVKLGD (83 aa). Cys-27 serves as the catalytic Phosphocysteine intermediate; for EIIB activity. Residues 130-484 form the PTS EIIC type-1 domain; the sequence is KSIANIFIPL…AMRQTDLLGD (355 aa). Transmembrane regions (helical) follow at residues 135–155, 160–180, 200–220, 234–254, 274–294, 305–325, 349–369, 384–404, 408–428, and 450–470; these read IFIPLIPAFIGAGLIGGIAAV, MVAGYISGAWITQLITVFNVI, FGATPGLGGVIGGTTLLTGIA, LQPGQGGIIGVIFAVWILSIV, IALLIVGLLTIFIFMPLAGFV, IISIGGVFSGFIIGASFLPLV, LLPIAAMAGAGQVGAALALWV, ALPVGFLGIGEPLIYGVTLPL, FLTACIGGGIGGAVIGGIGHI, and LGYIAGLLAAYAGGFVCTYLF.

It is found in the cell membrane. It carries out the reaction N-acetyl-beta-D-muramate-(1-&gt;4)-N-acetyl-D-glucosamine(out) + N(pros)-phospho-L-histidyl-[protein] = 6-phospho-N-acetyl-beta-D-muramate-(1-&gt;4)-N-acetyl-D-glucosamine(in) + L-histidyl-[protein]. The protein operates within cell wall biogenesis; peptidoglycan recycling. Its function is as follows. The phosphoenolpyruvate-dependent sugar phosphotransferase system (sugar PTS), a major carbohydrate active transport system, catalyzes the phosphorylation of incoming sugar substrates concomitantly with their translocation across the cell membrane. This system is involved in the uptake and phosphorylation of MurNAc-GlcNAc, the principle peptidoglycan turnover product of S.aureus, yielding cytoplasmic MurNAc 6P-GlcNAc. This Staphylococcus aureus (strain Mu50 / ATCC 700699) protein is PTS system MurNAc-GlcNAc-specific EIIBC component.